The sequence spans 122 residues: Large ribosomal subunit protein uL14c (122 aa).

Belongs to the universal ribosomal protein uL14 family. In terms of assembly, part of the 50S ribosomal subunit.

The protein resides in the plastid. It is found in the chloroplast. Its function is as follows. Binds to 23S rRNA. This Panax ginseng (Korean ginseng) protein is Large ribosomal subunit protein uL14c.